A 257-amino-acid polypeptide reads, in one-letter code: Putative pentatricopeptide repeat-containing protein At1g43010 (257 aa).

2 PPR repeats span residues 133 to 168 (KMRDYSVLLSSYTKPVRTVDKAEATFKKMRELGFLL) and 169 to 203 (KPYLFNSMICLYGQLQRLDMVEKLLYKLKKNNMEV).

The protein belongs to the PPR family. P subfamily.

In Arabidopsis thaliana (Mouse-ear cress), this protein is Putative pentatricopeptide repeat-containing protein At1g43010.